The primary structure comprises 101 residues: Urease subunit beta (101 aa).

The protein belongs to the urease beta subunit family. As to quaternary structure, heterotrimer of UreA (gamma), UreB (beta) and UreC (alpha) subunits. Three heterotrimers associate to form the active enzyme.

It localises to the cytoplasm. The enzyme catalyses urea + 2 H2O + H(+) = hydrogencarbonate + 2 NH4(+). Its pathway is nitrogen metabolism; urea degradation; CO(2) and NH(3) from urea (urease route): step 1/1. This is Urease subunit beta from Saccharophagus degradans (strain 2-40 / ATCC 43961 / DSM 17024).